The sequence spans 87 residues: Small ribosomal subunit protein bS18 (87 aa).

Positions 1 to 21 (MRHKPTPPKGNKSLGNALASK) are disordered.

This sequence belongs to the bacterial ribosomal protein bS18 family. In terms of assembly, part of the 30S ribosomal subunit. Forms a tight heterodimer with protein bS6.

Binds as a heterodimer with protein bS6 to the central domain of the 16S rRNA, where it helps stabilize the platform of the 30S subunit. This chain is Small ribosomal subunit protein bS18, found in Chlorobium phaeobacteroides (strain DSM 266 / SMG 266 / 2430).